A 94-amino-acid chain; its full sequence is Protein translocase subunit SecE (94 aa).

Residues 1-32 (MTDAVGSIDTPDAQDEVPESKKTRKGGKRAKK) are disordered. The segment covering 22–32 (KTRKGGKRAKK) has biased composition (basic residues). The chain crosses the membrane as a helical span at residues 59–81 (QLTSYTTVVIFFVAIMIRLVTVI).

Belongs to the SecE/SEC61-gamma family. As to quaternary structure, component of the Sec protein translocase complex. Heterotrimer consisting of SecY, SecE and SecG subunits. The heterotrimers can form oligomers, although 1 heterotrimer is thought to be able to translocate proteins. Interacts with the ribosome. Interacts with SecDF, and other proteins may be involved. Interacts with SecA.

It localises to the cell membrane. Its function is as follows. Essential subunit of the Sec protein translocation channel SecYEG. Clamps together the 2 halves of SecY. May contact the channel plug during translocation. The sequence is that of Protein translocase subunit SecE from Streptomyces galbus.